We begin with the raw amino-acid sequence, 564 residues long: Dihydroxy-acid dehydratase (564 aa).

Cysteine 53 is a binding site for [2Fe-2S] cluster. Residue aspartate 85 coordinates Mg(2+). Cysteine 126 lines the [2Fe-2S] cluster pocket. Mg(2+) contacts are provided by aspartate 127 and lysine 128. N6-carboxylysine is present on lysine 128. A [2Fe-2S] cluster-binding site is contributed by cysteine 203. Residue glutamate 454 participates in Mg(2+) binding. Serine 480 (proton acceptor) is an active-site residue.

Belongs to the IlvD/Edd family. As to quaternary structure, homodimer. [2Fe-2S] cluster is required as a cofactor. The cofactor is Mg(2+).

It carries out the reaction (2R)-2,3-dihydroxy-3-methylbutanoate = 3-methyl-2-oxobutanoate + H2O. It catalyses the reaction (2R,3R)-2,3-dihydroxy-3-methylpentanoate = (S)-3-methyl-2-oxopentanoate + H2O. The protein operates within amino-acid biosynthesis; L-isoleucine biosynthesis; L-isoleucine from 2-oxobutanoate: step 3/4. It participates in amino-acid biosynthesis; L-valine biosynthesis; L-valine from pyruvate: step 3/4. Functionally, functions in the biosynthesis of branched-chain amino acids. Catalyzes the dehydration of (2R,3R)-2,3-dihydroxy-3-methylpentanoate (2,3-dihydroxy-3-methylvalerate) into 2-oxo-3-methylpentanoate (2-oxo-3-methylvalerate) and of (2R)-2,3-dihydroxy-3-methylbutanoate (2,3-dihydroxyisovalerate) into 2-oxo-3-methylbutanoate (2-oxoisovalerate), the penultimate precursor to L-isoleucine and L-valine, respectively. The chain is Dihydroxy-acid dehydratase from Clavibacter michiganensis subsp. michiganensis (strain NCPPB 382).